We begin with the raw amino-acid sequence, 407 residues long: NADH-quinone oxidoreductase subunit D (407 aa).

Belongs to the complex I 49 kDa subunit family. NDH-1 is composed of 14 different subunits. Subunits NuoB, C, D, E, F, and G constitute the peripheral sector of the complex.

Its subcellular location is the cell inner membrane. The enzyme catalyses a quinone + NADH + 5 H(+)(in) = a quinol + NAD(+) + 4 H(+)(out). Its function is as follows. NDH-1 shuttles electrons from NADH, via FMN and iron-sulfur (Fe-S) centers, to quinones in the respiratory chain. The immediate electron acceptor for the enzyme in this species is believed to be ubiquinone. Couples the redox reaction to proton translocation (for every two electrons transferred, four hydrogen ions are translocated across the cytoplasmic membrane), and thus conserves the redox energy in a proton gradient. The polypeptide is NADH-quinone oxidoreductase subunit D (Roseobacter denitrificans (strain ATCC 33942 / OCh 114) (Erythrobacter sp. (strain OCh 114))).